The sequence spans 280 residues: uncharacterized protein (280 aa).

N-linked (GlcNAc...) asparagine; by host glycosylation is found at N75, N98, N107, N143, N158, N170, N192, N207, N224, and N230. The chain crosses the membrane as a helical span at residues 235-255 (AFTYGSWGVAMLLFAAVMVLV).

It belongs to the RL11 family.

Its subcellular location is the host membrane. This is an uncharacterized protein from Human cytomegalovirus (strain Merlin) (HHV-5).